Here is a 336-residue protein sequence, read N- to C-terminus: Ribosomal RNA large subunit methyltransferase F (336 aa).

Belongs to the methyltransferase superfamily. METTL16/RlmF family.

It localises to the cytoplasm. It carries out the reaction adenosine(1618) in 23S rRNA + S-adenosyl-L-methionine = N(6)-methyladenosine(1618) in 23S rRNA + S-adenosyl-L-homocysteine + H(+). Functionally, specifically methylates the adenine in position 1618 of 23S rRNA. The chain is Ribosomal RNA large subunit methyltransferase F from Yersinia pestis bv. Antiqua (strain Angola).